A 71-amino-acid chain; its full sequence is Heat-stable enterotoxin A (71 aa).

Residues 1 to 19 (MKKIVFVLVLMLSSFGAFG) form the signal peptide. The propeptide occupies 20-53 (QETVSGQFSDALSTPITAEVYKQACDPPLPPAEV). 3 cysteine pairs are disulfide-bonded: cysteine 59–cysteine 64, cysteine 60–cysteine 68, and cysteine 63–cysteine 71.

It belongs to the heat-stable enterotoxin family.

The protein localises to the secreted. Toxin which activates the particulate form of guanylate cyclase and increases cyclic GMP levels within the host intestinal epithelial cells. This chain is Heat-stable enterotoxin A (ystA), found in Yersinia enterocolitica.